We begin with the raw amino-acid sequence, 281 residues long: Nucleoid occlusion protein (281 aa).

The H-T-H motif DNA-binding region spans 145-164; sequence EALAQRLGKGQSTIANKLRL.

The protein belongs to the ParB family.

Its subcellular location is the cytoplasm. The protein resides in the nucleoid. Effects nucleoid occlusion by binding relatively nonspecifically to DNA and preventing the assembly of the division machinery in the vicinity of the nucleoid, especially under conditions that disturb the cell cycle. It helps to coordinate cell division and chromosome segregation by preventing the formation of the Z ring through the nucleoid, which would cause chromosome breakage. In Geobacillus sp. (strain WCH70), this protein is Nucleoid occlusion protein.